Reading from the N-terminus, the 524-residue chain is MLTCNKAGSGMVVDAASSNGPFQPVALLHIRDVPPADQEKLFIQKLRQCCVLFDFVSDPLSDLKWKEVKRAALSEMVEYITHNRNVITEPIYPEAVHMFAVNMFRTLPPSSNPTGAEFDPEEDEPTLEAAWPHLQLVYEFFLRFLESPDFQPNIAKKYIDQKFVLQLLELFDSEDPRERDFLKTTLHRIYGKFLGLRAYIRKQINNIFYRFIYETEHHNGIAELLEILGSIINGFALPLKEEHKIFLLKVLLPLHKVKSLSVYHPQLAYCVVQFLEKDSTLTEPVVMALLKYWPKTHSPKEVMFLNELEEILDVIEPSEFVKIMEPLFRQLAKCVSSPHFQVAERALYYWNNEYIMSLISDNAAKILPIMFPSLYRNSKTHWNKTIHGLIYNALKLFMEMNQKLFDDCTQQFKAEKLKEKLKMKEREEAWVKIENLAKANPQYAVYSQASAVSIPVAMETDGPQFEDVQMLKKTVSDEARQAQKELKKDRPLVRRKSELPQDPHTEKALEAHCRASELLSQDGR.

An N-acetylmethionine modification is found at Met-1. Residues 476-508 (SDEARQAQKELKKDRPLVRRKSELPQDPHTEKA) form a disordered region.

Belongs to the phosphatase 2A regulatory subunit B56 family. As to quaternary structure, PP2A consists of a common heterodimeric core enzyme, composed of PPP2CA a 36 kDa catalytic subunit (subunit C) and PPP2R1A a 65 kDa constant regulatory subunit (PR65 or subunit A), that associates with a variety of regulatory subunits. Proteins that associate with the core dimer include three families of regulatory subunits B (the R2/B/PR55/B55, R3/B''/PR72/PR130/PR59 and R5/B'/B56 families), the 48 kDa variable regulatory subunit, viral proteins, and cell signaling molecules. Interacts with SGO1. Interacts with SGO1; the interaction is direct. May interact with TP53. Interacts with IER3 and/or ERK kinases; regulates ERK dephosphorylation. Interacts with CIP2A; this interaction stabilizes CIP2A. Highest levels in heart, liver and brain. Lower levels in skeletal muscle, spleen, kidney and lung. Isoform 4 is testis-specific.

It localises to the nucleus. The protein localises to the chromosome. The protein resides in the centromere. Its function is as follows. The B regulatory subunit might modulate substrate selectivity and catalytic activity, and might also direct the localization of the catalytic enzyme to a particular subcellular compartment. The PP2A-PPP2R5C holoenzyme may activate TP53 and play a role in DNA damage-induced inhibition of cell proliferation. PP2A-PPP2R5C may also regulate the ERK signaling pathway through ERK dephosphorylation. The polypeptide is Serine/threonine-protein phosphatase 2A 56 kDa regulatory subunit gamma isoform (Ppp2r5c) (Mus musculus (Mouse)).